A 426-amino-acid chain; its full sequence is Histidine--tRNA ligase (426 aa).

This sequence belongs to the class-II aminoacyl-tRNA synthetase family. Homodimer.

It is found in the cytoplasm. The catalysed reaction is tRNA(His) + L-histidine + ATP = L-histidyl-tRNA(His) + AMP + diphosphate + H(+). In Streptococcus equi subsp. zooepidemicus (strain H70), this protein is Histidine--tRNA ligase.